Consider the following 749-residue polypeptide: 1,4-alpha-glucan branching enzyme GlgB (749 aa).

The Nucleophile role is filled by Asp-415. Glu-468 acts as the Proton donor in catalysis.

Belongs to the glycosyl hydrolase 13 family. GlgB subfamily. In terms of assembly, monomer.

It catalyses the reaction Transfers a segment of a (1-&gt;4)-alpha-D-glucan chain to a primary hydroxy group in a similar glucan chain.. It participates in glycan biosynthesis; glycogen biosynthesis. Its function is as follows. Catalyzes the formation of the alpha-1,6-glucosidic linkages in glycogen by scission of a 1,4-alpha-linked oligosaccharide from growing alpha-1,4-glucan chains and the subsequent attachment of the oligosaccharide to the alpha-1,6 position. This is 1,4-alpha-glucan branching enzyme GlgB from Nitrosococcus oceani (strain ATCC 19707 / BCRC 17464 / JCM 30415 / NCIMB 11848 / C-107).